The chain runs to 283 residues: Protein-L-isoaspartate O-methyltransferase (283 aa).

Ser122 is an active-site residue.

The protein belongs to the methyltransferase superfamily. L-isoaspartyl/D-aspartyl protein methyltransferase family.

Its subcellular location is the cytoplasm. It carries out the reaction [protein]-L-isoaspartate + S-adenosyl-L-methionine = [protein]-L-isoaspartate alpha-methyl ester + S-adenosyl-L-homocysteine. In terms of biological role, catalyzes the methyl esterification of L-isoaspartyl residues in peptides and proteins that result from spontaneous decomposition of normal L-aspartyl and L-asparaginyl residues. It plays a role in the repair and/or degradation of damaged proteins. This chain is Protein-L-isoaspartate O-methyltransferase, found in Leptothrix cholodnii (strain ATCC 51168 / LMG 8142 / SP-6) (Leptothrix discophora (strain SP-6)).